The following is a 471-amino-acid chain: 5-hydroxytryptamine receptor 2A (471 aa).

Residues 1–80 (MEILCEDNTS…LQEKNWSALL (80 aa)) are Extracellular-facing. N-linked (GlcNAc...) asparagine glycosylation is found at asparagine 8, asparagine 38, asparagine 44, asparagine 51, and asparagine 54. The chain crosses the membrane as a helical span at residues 81 to 97 (TAVVIILTIAGNILVIM). The Cytoplasmic portion of the chain corresponds to 98 to 111 (AVSLEKKLQNATNY). Residues 112–137 (FLMSLAIADMLLGFLVMPVSMLTILY) traverse the membrane as a helical segment. At 138-146 (GYRWPLPSK) the chain is on the extracellular side. A helical transmembrane segment spans residues 147-171 (LCAVWIYLDVLFSTASIMHLCAISL). A disulfide bridge connects residues cysteine 148 and cysteine 227. A serotonin-binding site is contributed by aspartate 155. The DRY motif; important for ligand-induced conformation changes signature appears at 172–174 (DRY). At 172–191 (DRYVAIQNPIHHSRFNSRTK) the chain is on the cytoplasmic side. A helical transmembrane segment spans residues 192–215 (AFLKIIAVWTISVGVSMPIPVFGL). Topologically, residues 216–232 (QDDSKVFKQGSCLLADD) are extracellular. The chain crosses the membrane as a helical span at residues 233–258 (NFVLIGSFVAFFIPLTIMVITYFLTI). The Cytoplasmic segment spans residues 259–322 (KSLQKEATLC…QSISNEQKAC (64 aa)). Serine 280 carries the phosphoserine modification. Residues 323 to 348 (KVLGIVFFLFVVMWCPFFITNIMAVI) form a helical membrane-spanning segment. Asparagine 343 is a binding site for serotonin. A disulfide bridge links cysteine 349 with cysteine 353. Over 349–356 (CKESCNEH) the chain is Extracellular. A helical membrane pass occupies residues 357 to 382 (VIGALLNVFVWIGYLSSAVNPLVYTL). The short motif at 376-380 (NPLVY) is the NPxxY motif; important for ligand-induced conformation changes and signaling element. Residues 383 to 471 (FNKTYRSAFS…NTVNEKVSCV (89 aa)) lie on the Cytoplasmic side of the membrane. Positions 469–471 (SCV) match the PDZ-binding motif.

This sequence belongs to the G-protein coupled receptor 1 family. As to quaternary structure, interacts (via C-terminus) with MPDZ and PATJ. May interact (via C-terminus) with MPP3, PRDX6, DLG4, DLG1, CASK, APBA1 and MAGI2. Interacts with GRM2 and DRD2; this may affect signaling.

The protein localises to the cell membrane. It localises to the cell projection. It is found in the dendrite. The protein resides in the axon. Its subcellular location is the cytoplasmic vesicle. The protein localises to the membrane. It localises to the caveola. It is found in the presynapse. G-protein coupled receptor activity is regulated by lipids: oleamide increases HTR2A-mediated activity. Functionally, G-protein coupled receptor for 5-hydroxytryptamine (serotonin). Also functions as a receptor for various drugs and psychoactive substances, including mescaline, psilocybin, 1-(2,5-dimethoxy-4-iodophenyl)-2-aminopropane (DOI) and lysergic acid diethylamide (LSD). Ligand binding causes a conformation change that triggers signaling via guanine nucleotide-binding proteins (G proteins) and modulates the activity of downstream effectors. HTR2A is coupled to G(q)/G(11) G alpha proteins and activates phospholipase C-beta, releasing diacylglycerol (DAG) and inositol 1,4,5-trisphosphate (IP3) second messengers that modulate the activity of phosphatidylinositol 3-kinase and promote the release of Ca(2+) ions from intracellular stores, respectively. Beta-arrestin family members inhibit signaling via G proteins and mediate activation of alternative signaling pathways. Affects neural activity, perception, cognition and mood. Plays a role in the regulation of behavior, including responses to anxiogenic situations and psychoactive substances. Plays a role in intestinal smooth muscle contraction, and may play a role in arterial vasoconstriction. The protein is 5-hydroxytryptamine receptor 2A (HTR2A) of Cricetulus griseus (Chinese hamster).